The chain runs to 333 residues: MALRWGIVSAGLIANDFTTVLSSLPSSEHQVVAVAARDLNRAEEFAQKFNIPKAYGSYEELAKDPNVEVAYIATQHPQHKPAVLLCLAAGKAVLCEKPMGVNAAEVREMVAKARSQGVFLMEAIWSRFFPAMEALREVLVQGTIGDLRVARAEFGFDLSHIPRATDWNQAGGGLLDLGIYCVQFLSMIFGAQKPEKISAVGRIHETGVDDTVSVLLQYPGGVHGSFTCSISSNLPNTAYVSGTKGMAQIQKLWAPTELVVNGERKEFPPPVLGKDYNFVNGSCMLYEANHVRECLRKGLKESPVVPLAESELLAEILEEARKAIGVTFPQDKR.

Belongs to the Gfo/Idh/MocA family. In terms of assembly, homodimer.

It carries out the reaction (1R,2R)-1,2-dihydrobenzene-1,2-diol + NADP(+) = catechol + NADPH + H(+). The catalysed reaction is D-xylose + NADP(+) = D-xylono-1,5-lactone + NADPH + H(+). In Mus musculus (Mouse), this protein is Trans-1,2-dihydrobenzene-1,2-diol dehydrogenase (Dhdh).